The following is a 556-amino-acid chain: Formate--tetrahydrofolate ligase (556 aa).

65–72 (TPAGEGKS) is an ATP binding site.

It belongs to the formate--tetrahydrofolate ligase family.

The catalysed reaction is (6S)-5,6,7,8-tetrahydrofolate + formate + ATP = (6R)-10-formyltetrahydrofolate + ADP + phosphate. The protein operates within one-carbon metabolism; tetrahydrofolate interconversion. The chain is Formate--tetrahydrofolate ligase from Streptococcus mutans serotype c (strain ATCC 700610 / UA159).